The primary structure comprises 340 residues: Mitochondrial glycine transporter (340 aa).

Solcar repeat units lie at residues 23–108, 128–218, and 237–325; these read PKTL…ARNG, LSPF…FKND, and RSTI…LIKS. The next 6 membrane-spanning stretches (helical) occupy residues 29 to 54, 83 to 109, 134 to 159, 193 to 216, 241 to 267, and 300 to 318; these read LISG…TRLQ, GALP…RNGI, LATG…TRYE, GSFA…ELFK, INTS…KTRL, and GLSL…SWCI.

The protein belongs to the mitochondrial carrier (TC 2.A.29) family. SLC25A38 subfamily.

It localises to the mitochondrion inner membrane. It carries out the reaction glycine(in) = glycine(out). Mitochondrial glycine transporter that imports glycine into the mitochondrial matrix. Plays an important role in providing glycine for the first enzymatic step in heme biosynthesis, the condensation of glycine with succinyl-CoA to produce 5-aminolevulinate (ALA) in the mitochondrial matrix. This Debaryomyces hansenii (strain ATCC 36239 / CBS 767 / BCRC 21394 / JCM 1990 / NBRC 0083 / IGC 2968) (Yeast) protein is Mitochondrial glycine transporter.